Reading from the N-terminus, the 217-residue chain is Large ribosomal subunit protein uL3 (217 aa).

The segment at 127–162 (GFSRGPMSHGSKNHRAPGSTGAGTTPGRIYPGKRMA) is disordered. Residues 142-153 (APGSTGAGTTPG) show a composition bias toward low complexity.

It belongs to the universal ribosomal protein uL3 family. Part of the 50S ribosomal subunit. Forms a cluster with proteins L14 and L19.

One of the primary rRNA binding proteins, it binds directly near the 3'-end of the 23S rRNA, where it nucleates assembly of the 50S subunit. The protein is Large ribosomal subunit protein uL3 of Prochlorococcus marinus (strain MIT 9312).